A 731-amino-acid polypeptide reads, in one-letter code: Golgin subfamily A member 5 (731 aa).

N-acetylserine is present on Ser-2. The Cytoplasmic segment spans residues 2 to 698 (SWFVDLAGKA…IFLRRYPIAR (697 aa)). Arg-89 carries the post-translational modification Dimethylated arginine. Positions 93-222 (EASHPVENAS…PTPNDDGKSH (130 aa)) are disordered. Phosphoserine is present on Ser-116. Positions 134–146 (PTGRVEIRKEKGK) are enriched in basic and acidic residues. The span at 147–167 (TPVFQSSQTSSVSSVNPSVTT) shows a compositional bias: low complexity. The span at 173-188 (ENSFGSQTHEAASNSD) shows a compositional bias: polar residues. A compositionally biased stretch (basic and acidic residues) spans 189–199 (SSHEGQEESSK). Residues 216–632 (NDDGKSHELS…EQQMNSASGS (417 aa)) are a coiled coil. Residues 699 to 719 (VFVIIYMALLHLWVMIVLLTY) form a helical; Anchor for type IV membrane protein membrane-spanning segment. Topologically, residues 720–731 (TPEMHHDQPYGK) are lumenal.

As to quaternary structure, homodimer. Interacts with RAB1A that has been activated by GTP-binding, and possibly also with OCRL1. Interacts with isoform CASP of CUX1. Highly phosphorylated during mitosis. Phosphorylation is barely detectable during interphase. Ubiquitous. Highly expressed in seminiferous tubules and Leydig cells in testis, and detected at much lower levels in the other tissues tested. Expression is very low or not detectable in spermatozoa.

Its subcellular location is the golgi apparatus membrane. Functionally, involved in maintaining Golgi structure. Stimulates the formation of Golgi stacks and ribbons. Involved in intra-Golgi retrograde transport. This chain is Golgin subfamily A member 5 (GOLGA5), found in Homo sapiens (Human).